The sequence spans 680 residues: Potassium-transporting ATPase ATP-binding subunit (680 aa).

The next 4 membrane-spanning stretches (helical) occupy residues 37-57 (VIFVTEAMAALVTLFFVLDVA), 69-89 (IAAWLWFTVLFATFAEAVAEG), 223-243 (ILLSGLTLIFLIAVVTLWGLA), and 257-277 (ALLVTLIPTTIGGLLSAIGIA). The active-site 4-aspartylphosphate intermediate is the Asp307. ATP-binding positions include Asp344, Glu348, 375 to 382 (FTAETRLS), and Lys393. Residues Asp516 and Asp520 each coordinate Mg(2+). The next 3 membrane-spanning stretches (helical) occupy residues 586 to 606 (FAIIPALFVTTYPALGVLNIM), 614 to 634 (AILSAVIFNALIIVALIPLAL), and 652 to 672 (LLVYGLGGLVLPFAGIKLIDL).

It belongs to the cation transport ATPase (P-type) (TC 3.A.3) family. Type IA subfamily. The system is composed of three essential subunits: KdpA, KdpB and KdpC.

Its subcellular location is the cell inner membrane. It carries out the reaction K(+)(out) + ATP + H2O = K(+)(in) + ADP + phosphate + H(+). Its function is as follows. Part of the high-affinity ATP-driven potassium transport (or Kdp) system, which catalyzes the hydrolysis of ATP coupled with the electrogenic transport of potassium into the cytoplasm. This subunit is responsible for energy coupling to the transport system and for the release of the potassium ions to the cytoplasm. This chain is Potassium-transporting ATPase ATP-binding subunit, found in Rhizobium meliloti (strain 1021) (Ensifer meliloti).